The sequence spans 313 residues: Mitochondrial uncoupling protein 5 (313 aa).

3 Solcar repeats span residues 4 to 108, 117 to 208, and 217 to 307; these read KGFA…IKGE, MPLM…VKET, and DGLG…VKKL. A run of 6 helical transmembrane segments spans residues 6–26, 77–97, 123–143, 182–202, 223–243, and 280–300; these read FAEG…LDLI, MRAL…YSTT, IGAG…ADVA, RGSS…LASY, VSAS…VDVI, and YKGF…LFVT.

It belongs to the mitochondrial carrier (TC 2.A.29) family. Expressed in roots, leaves, stems and flowers.

The protein resides in the mitochondrion inner membrane. PUMPS are mitochondrial transporter proteins that create proton leaks across the inner mitochondrial membrane, thus uncoupling oxidative phosphorylation. This leads to a decrease in the efficiency of oxidative phosphorylation and an increase in heat production. May be involved in protecting plant cells against oxidative stress damage. Recombinant PUMP5, reconstituted into liposomes, transports a wide range of dicarboxylic acids including malate, oxaloacetate and succinate as well as phosphate, sulfate and thiosulfate. However, it is unknown if these transports are of any biological significance in vivo. This is Mitochondrial uncoupling protein 5 (PUMP5) from Arabidopsis thaliana (Mouse-ear cress).